Here is a 90-residue protein sequence, read N- to C-terminus: Antitoxin epsilon (90 aa).

The protein belongs to the epsilon antitoxin family. In terms of assembly, in the presence of the zeta toxin, forms an inactive PezA(2)PezT(2) heterotetramer. The heterotetramer is still able to bind the zeta toxin substrate UNAG.

Its function is as follows. Antitoxin component of a type II toxin-antitoxin (TA) system. Neutralizes the toxic effect of cognate zeta toxin. Part of a postsegregational killing (PSK) system involved in the killing of plasmid-free cells. Continuous synthesis of the epsilon antitoxin is required to counteract the zeta toxin. The chain is Antitoxin epsilon from Streptococcus pyogenes.